Here is a 98-residue protein sequence, read N- to C-terminus: Small ribosomal subunit protein bS18 (98 aa).

The protein belongs to the bacterial ribosomal protein bS18 family. Part of the 30S ribosomal subunit. Forms a tight heterodimer with protein bS6.

Its function is as follows. Binds as a heterodimer with protein bS6 to the central domain of the 16S rRNA, where it helps stabilize the platform of the 30S subunit. The chain is Small ribosomal subunit protein bS18 from Flavobacterium psychrophilum (strain ATCC 49511 / DSM 21280 / CIP 103535 / JIP02/86).